Here is a 377-residue protein sequence, read N- to C-terminus: Alanine racemase (377 aa).

Catalysis depends on Lys-33, which acts as the Proton acceptor; specific for D-alanine. Lys-33 is subject to N6-(pyridoxal phosphate)lysine. Arg-134 provides a ligand contact to substrate. Catalysis depends on Tyr-267, which acts as the Proton acceptor; specific for L-alanine. Residue Met-315 coordinates substrate.

This sequence belongs to the alanine racemase family. Pyridoxal 5'-phosphate is required as a cofactor.

The enzyme catalyses L-alanine = D-alanine. Its pathway is amino-acid biosynthesis; D-alanine biosynthesis; D-alanine from L-alanine: step 1/1. Catalyzes the interconversion of L-alanine and D-alanine. May also act on other amino acids. The sequence is that of Alanine racemase (alr) from Treponema pallidum subsp. pallidum (strain SS14).